We begin with the raw amino-acid sequence, 572 residues long: Proline--tRNA ligase (572 aa).

This sequence belongs to the class-II aminoacyl-tRNA synthetase family. ProS type 1 subfamily. In terms of assembly, homodimer.

Its subcellular location is the cytoplasm. The enzyme catalyses tRNA(Pro) + L-proline + ATP = L-prolyl-tRNA(Pro) + AMP + diphosphate. Functionally, catalyzes the attachment of proline to tRNA(Pro) in a two-step reaction: proline is first activated by ATP to form Pro-AMP and then transferred to the acceptor end of tRNA(Pro). As ProRS can inadvertently accommodate and process non-cognate amino acids such as alanine and cysteine, to avoid such errors it has two additional distinct editing activities against alanine. One activity is designated as 'pretransfer' editing and involves the tRNA(Pro)-independent hydrolysis of activated Ala-AMP. The other activity is designated 'posttransfer' editing and involves deacylation of mischarged Ala-tRNA(Pro). The misacylated Cys-tRNA(Pro) is not edited by ProRS. This Enterococcus faecalis (strain ATCC 700802 / V583) protein is Proline--tRNA ligase.